The following is an 89-amino-acid chain: Large ribosomal subunit protein bL27 (89 aa).

Positions Met-1–Gly-22 are disordered.

The protein belongs to the bacterial ribosomal protein bL27 family.

This Gluconacetobacter diazotrophicus (strain ATCC 49037 / DSM 5601 / CCUG 37298 / CIP 103539 / LMG 7603 / PAl5) protein is Large ribosomal subunit protein bL27.